A 501-amino-acid chain; its full sequence is Glutamate--tRNA ligase (501 aa).

A 'HIGH' region motif is present at residues Pro11–Asn21. The 'KMSKS' region signature appears at Lys257–Arg261. An ATP-binding site is contributed by Lys260.

Belongs to the class-I aminoacyl-tRNA synthetase family. Glutamate--tRNA ligase type 1 subfamily. Monomer.

It is found in the cytoplasm. The catalysed reaction is tRNA(Glu) + L-glutamate + ATP = L-glutamyl-tRNA(Glu) + AMP + diphosphate. In terms of biological role, catalyzes the attachment of glutamate to tRNA(Glu) in a two-step reaction: glutamate is first activated by ATP to form Glu-AMP and then transferred to the acceptor end of tRNA(Glu). The chain is Glutamate--tRNA ligase from Limosilactobacillus reuteri subsp. reuteri (strain JCM 1112) (Lactobacillus reuteri).